Reading from the N-terminus, the 124-residue chain is Large ribosomal subunit protein bL12 (124 aa).

Belongs to the bacterial ribosomal protein bL12 family. As to quaternary structure, homodimer. Part of the ribosomal stalk of the 50S ribosomal subunit. Forms a multimeric L10(L12)X complex, where L10 forms an elongated spine to which 2 to 4 L12 dimers bind in a sequential fashion. Binds GTP-bound translation factors.

Its function is as follows. Forms part of the ribosomal stalk which helps the ribosome interact with GTP-bound translation factors. Is thus essential for accurate translation. This is Large ribosomal subunit protein bL12 from Wolinella succinogenes (strain ATCC 29543 / DSM 1740 / CCUG 13145 / JCM 31913 / LMG 7466 / NCTC 11488 / FDC 602W) (Vibrio succinogenes).